Consider the following 214-residue polypeptide: 2-phospho-L-lactate guanylyltransferase (214 aa).

Belongs to the CofC family. As to quaternary structure, homodimer.

The enzyme catalyses (2S)-2-phospholactate + GTP + H(+) = (2S)-lactyl-2-diphospho-5'-guanosine + diphosphate. It participates in cofactor biosynthesis; coenzyme F420 biosynthesis. Its function is as follows. Guanylyltransferase that catalyzes the activation of (2S)-2-phospholactate (2-PL) as (2S)-lactyl-2-diphospho-5'-guanosine, via the condensation of 2-PL with GTP. It is involved in the biosynthesis of coenzyme F420, a hydride carrier cofactor. The chain is 2-phospho-L-lactate guanylyltransferase from Methanoregula boonei (strain DSM 21154 / JCM 14090 / 6A8).